The sequence spans 250 residues: Adapter protein MecA (250 aa).

This sequence belongs to the MecA family. Homodimer.

In terms of biological role, enables the recognition and targeting of unfolded and aggregated proteins to the ClpC protease or to other proteins involved in proteolysis. In Streptococcus sanguinis (strain SK36), this protein is Adapter protein MecA.